The chain runs to 333 residues: Phosphate acyltransferase (333 aa).

This sequence belongs to the PlsX family. In terms of assembly, homodimer. Probably interacts with PlsY.

The protein localises to the cytoplasm. It catalyses the reaction a fatty acyl-[ACP] + phosphate = an acyl phosphate + holo-[ACP]. The protein operates within lipid metabolism; phospholipid metabolism. Its function is as follows. Catalyzes the reversible formation of acyl-phosphate (acyl-PO(4)) from acyl-[acyl-carrier-protein] (acyl-ACP). This enzyme utilizes acyl-ACP as fatty acyl donor, but not acyl-CoA. In Clostridium botulinum (strain Alaska E43 / Type E3), this protein is Phosphate acyltransferase.